A 105-amino-acid polypeptide reads, in one-letter code: MRLFTLILMVVLALVQRQLWFGKNGLVEYRQVSENLLRRQADNQKLQERNMLLKEDIEDLKSGLEAIEELARNDLGFIKSGETFYRVLPRDSAGQNKQSSLPKSD.

Over 1–3 the chain is Cytoplasmic; that stretch reads MRL. The chain crosses the membrane as a helical span at residues 4-21; it reads FTLILMVVLALVQRQLWF. Residues 22–105 are Periplasmic-facing; the sequence is GKNGLVEYRQ…NKQSSLPKSD (84 aa). Residues 28–74 adopt a coiled-coil conformation; that stretch reads EYRQVSENLLRRQADNQKLQERNMLLKEDIEDLKSGLEAIEELARND.

The protein belongs to the FtsB family. As to quaternary structure, part of a complex composed of FtsB, FtsL and FtsQ.

It localises to the cell inner membrane. In terms of biological role, essential cell division protein. May link together the upstream cell division proteins, which are predominantly cytoplasmic, with the downstream cell division proteins, which are predominantly periplasmic. The polypeptide is Cell division protein FtsB (Tolumonas auensis (strain DSM 9187 / NBRC 110442 / TA 4)).